The primary structure comprises 377 residues: Cyclin-I (377 aa).

The segment at 357–377 (DLSRQEGHASPCPPLQPVSVM) is disordered. Residues 367–377 (PCPPLQPVSVM) are compositionally biased toward pro residues.

The protein belongs to the cyclin family. In terms of tissue distribution, highest levels in adult heart, brain and skeletal muscle. Lower levels in adult placenta, lung, kidney and pancreas. Also high levels in fetal brain and lower levels in fetal lung, liver and kidney. Also abundant in testis and thyroid.

It is found in the nucleus membrane. This is Cyclin-I from Homo sapiens (Human).